A 106-amino-acid polypeptide reads, in one-letter code: Thioredoxin (106 aa).

Positions 2–106 constitute a Thioredoxin domain; sequence VQVISNLDEF…LESLVQKSLA (105 aa). Active-site nucleophile residues include Cys30 and Cys33. Cys30 and Cys33 are joined by a disulfide.

This sequence belongs to the thioredoxin family.

In terms of biological role, participates in various redox reactions through the reversible oxidation of its active center dithiol to a disulfide and catalyzes dithiol-disulfide exchange reactions. The protein is Thioredoxin of Coprinus comatus (Shaggy mane).